The primary structure comprises 513 residues: Tyrosine-protein phosphatase non-receptor type substrate 1 (513 aa).

Positions 1 to 31 are cleaved as a signal peptide; that stretch reads MEPAGPAPGRLGPLLLCLLLSASCFCTGATG. Positions 32 to 137 constitute an Ig-like V-type domain; it reads KELKVTQPEK…SSEPDTEIQS (106 aa). At 32–373 the chain is on the extracellular side; that stretch reads KELKVTQPEK…PDNNATHNWN (342 aa). N54, N92, N168, N180, N205, N209, N246, N271, N293, N302, N312, N320, N345, and N367 each carry an N-linked (GlcNAc...) asparagine glycan. Residues C55 and C121 are joined by a disulfide bond. 2 consecutive Ig-like C1-type domains span residues 149-248 and 255-343; these read PSPP…ANLS and PTVK…PAIT. Cysteines 171 and 229 form a disulfide. Cysteines 274 and 332 form a disulfide. Residues 374-394 form a helical membrane-spanning segment; the sequence is VFIGVGVACALLVVLLMAALY. Over 395–511 the chain is Cytoplasmic; sequence LLRIKQKKAK…FSEYASVQVQ (117 aa). Position 440 is a phosphotyrosine; by Tyr-kinases (Y440). The SH2-binding signature appears at 440-443; it reads YADL. The disordered stretch occupies residues 444 to 513; it reads NLPKEKKPAP…EYASVQVQRK (70 aa). The SH3-binding motif lies at 450–455; the sequence is KPAPRA. 3 positions are modified to phosphotyrosine; by Tyr-kinases: Y464, Y481, and Y505. 3 consecutive short sequence motifs (SH2-binding) follow at residues 464 to 467, 481 to 484, and 505 to 508; these read YASI, YADL, and YASV. A compositionally biased stretch (polar residues) spans 504-513; sequence EYASVQVQRK.

Binds PTPN11 when tyrosine-phosphorylated, except in macrophages, where it primarily binds PTPN6. Binds GRB2 vitro. Binds FGR. Binds JAK2 irrespective of its phosphorylation status and forms a stable complex. Binds SCAP1 and/or SCAP2. The resulting complex recruits FYB1. Binds PTK2B. Interacts with TRIM2. N-glycosylated. In terms of processing, phosphorylated on tyrosine residues. In terms of tissue distribution, highly expressed in cerebral cortex, brain, spinal cord, cerebellum and spleen, and at much lower levels in kidney, thymus, heart, lung and liver. Within the cerebellum, highly expressed throughout the molecular layer, and in synaptic glomeruli in the granule cell layer. Detected in neurons of the hippocampus and dentate gyrus, and in olfactory bulb. Not detected in Purkinje cells. Highly expressed in the plexiform layers, optic fiber layer and the outer segments of the photoreceptor layer in the retina. Highly expressed in macrophages. Isoform 3 is detected at very low levels in all tissues tested.

It is found in the membrane. Immunoglobulin-like cell surface receptor for CD47. Acts as a docking protein and induces translocation of PTPN6, PTPN11 and other binding partners from the cytosol to the plasma membrane. Supports adhesion of cerebellar neurons, neurite outgrowth and glial cell attachment. May play a key role in intracellular signaling during synaptogenesis and in synaptic function. Involved in the negative regulation of receptor tyrosine kinase-coupled cellular responses induced by cell adhesion, growth factors or insulin. Mediates negative regulation of phagocytosis, mast cell activation and dendritic cell activation. CD47 binding prevents maturation of immature dendritic cells and inhibits cytokine production by mature dendritic cells. Plays a role in antiviral immunity and limits new world arenavirus infection by decreasing virus internalization. Receptor for THBS1. Interaction with THBS1 stimulates phosphorylation of SIRPA. In response to THBS1, involved in ROS signaling in non-phagocytic cells, stimulating NADPH oxidase-derived ROS production. The protein is Tyrosine-protein phosphatase non-receptor type substrate 1 (Sirpa) of Mus musculus (Mouse).